Consider the following 913-residue polypeptide: Protein translocase subunit SecA (913 aa).

ATP-binding positions include Q87, 105 to 109 (GEGKT), and D512. The interval 864–913 (LDQPEEEPAEVEGQPDVAVASVRTEPKIGRNEPCPCGSGKKYKHCHGQVQ) is disordered. Residues C897, C899, C908, and H909 each coordinate Zn(2+). Basic residues predominate over residues 903 to 913 (KKYKHCHGQVQ).

This sequence belongs to the SecA family. Monomer and homodimer. Part of the essential Sec protein translocation apparatus which comprises SecA, SecYEG and auxiliary proteins SecDF-YajC and YidC. Requires Zn(2+) as cofactor.

The protein resides in the cell inner membrane. It localises to the cytoplasm. It catalyses the reaction ATP + H2O + cellular proteinSide 1 = ADP + phosphate + cellular proteinSide 2.. Its function is as follows. Part of the Sec protein translocase complex. Interacts with the SecYEG preprotein conducting channel. Has a central role in coupling the hydrolysis of ATP to the transfer of proteins into and across the cell membrane, serving both as a receptor for the preprotein-SecB complex and as an ATP-driven molecular motor driving the stepwise translocation of polypeptide chains across the membrane. In Stutzerimonas stutzeri (strain A1501) (Pseudomonas stutzeri), this protein is Protein translocase subunit SecA.